The primary structure comprises 109 residues: Tektin-3 (109 aa).

It belongs to the tektin family. Microtubule inner protein component of sperm flagellar doublet microtubules. Interacts with TEKT1, TEKT2, TEKT4 and TEKT5. Interacts with CCDC38. In terms of processing, N- and O-glycosylated. May be proteolytically processed during the epididymal transit of spermatozoa. Post-translationally, ubiquitinated, leading to its degradation. Deubiquitinated by USP16, promoting its stability.

The protein localises to the cytoplasm. It localises to the cytoskeleton. The protein resides in the cilium axoneme. Its subcellular location is the flagellum axoneme. It is found in the cytoplasmic vesicle. The protein localises to the secretory vesicle. It localises to the acrosome outer membrane. Its function is as follows. Microtubule inner protein (MIP) part of the dynein-decorated doublet microtubules (DMTs) in cilia and flagellar axoneme. Forms filamentous polymers in the walls of ciliary and flagellar microtubules. Required for normal sperm mobility. The sequence is that of Tektin-3 from Mesocricetus auratus (Golden hamster).